We begin with the raw amino-acid sequence, 340 residues long: GTP-binding protein REM 2 (340 aa).

Residues methionine 1–threonine 13 are compositionally biased toward acidic residues. A disordered region spans residues methionine 1–alanine 107. Serine 27 bears the Phosphoserine mark. The span at leucine 40–arginine 53 shows a compositional bias: basic and acidic residues. Low complexity predominate over residues serine 93 to glycine 104. Residues glycine 121 to serine 128, asparagine 229 to aspartate 232, and alanine 260 to alanine 261 each bind GTP. Residues arginine 283 to leucine 308 form a disordered region. Residues proline 293–proline 302 show a composition bias toward pro residues. Position 295 is a phosphoserine (serine 295).

Belongs to the small GTPase superfamily. RGK family.

It localises to the cell membrane. Binds GTP saturably and exhibits a low intrinsic rate of GTP hydrolysis. The protein is GTP-binding protein REM 2 (REM2) of Homo sapiens (Human).